The chain runs to 42 residues: Large ribosomal subunit protein bL36 (42 aa).

Belongs to the bacterial ribosomal protein bL36 family.

The polypeptide is Large ribosomal subunit protein bL36 (Wolbachia pipientis wMel).